The chain runs to 358 residues: 3-isopropylmalate dehydrogenase (358 aa).

Substrate-binding residues include arginine 92, arginine 102, arginine 130, and aspartate 224. Residues aspartate 224, aspartate 248, and aspartate 252 each contribute to the Mg(2+) site. Position 282 to 294 (282 to 294 (GSAPDIAGQGIAN)) interacts with NAD(+).

The protein belongs to the isocitrate and isopropylmalate dehydrogenases family. LeuB type 1 subfamily. In terms of assembly, homodimer. It depends on Mg(2+) as a cofactor. Mn(2+) is required as a cofactor.

It is found in the cytoplasm. It catalyses the reaction (2R,3S)-3-isopropylmalate + NAD(+) = 4-methyl-2-oxopentanoate + CO2 + NADH. Its pathway is amino-acid biosynthesis; L-leucine biosynthesis; L-leucine from 3-methyl-2-oxobutanoate: step 3/4. Its function is as follows. Catalyzes the oxidation of 3-carboxy-2-hydroxy-4-methylpentanoate (3-isopropylmalate) to 3-carboxy-4-methyl-2-oxopentanoate. The product decarboxylates to 4-methyl-2 oxopentanoate. The chain is 3-isopropylmalate dehydrogenase from Bordetella avium (strain 197N).